The sequence spans 163 residues: NADH-quinone oxidoreductase subunit I (163 aa).

2 4Fe-4S ferredoxin-type domains span residues 53–83 (LRRY…IEAG) and 94–123 (VRYD…EGPN). Residues Cys-63, Cys-66, Cys-69, Cys-73, Cys-103, Cys-106, Cys-109, and Cys-113 each contribute to the [4Fe-4S] cluster site.

The protein belongs to the complex I 23 kDa subunit family. As to quaternary structure, NDH-1 is composed of 14 different subunits. Subunits NuoA, H, J, K, L, M, N constitute the membrane sector of the complex. [4Fe-4S] cluster serves as cofactor.

It localises to the cell inner membrane. The enzyme catalyses a quinone + NADH + 5 H(+)(in) = a quinol + NAD(+) + 4 H(+)(out). Functionally, NDH-1 shuttles electrons from NADH, via FMN and iron-sulfur (Fe-S) centers, to quinones in the respiratory chain. The immediate electron acceptor for the enzyme in this species is believed to be ubiquinone. Couples the redox reaction to proton translocation (for every two electrons transferred, four hydrogen ions are translocated across the cytoplasmic membrane), and thus conserves the redox energy in a proton gradient. The polypeptide is NADH-quinone oxidoreductase subunit I (Agrobacterium fabrum (strain C58 / ATCC 33970) (Agrobacterium tumefaciens (strain C58))).